A 79-amino-acid polypeptide reads, in one-letter code: Serine rich endogenous peptide 2 (79 aa).

A signal peptide spans 1–19 (MANNLGLVILLLVIVLVSC). The segment at 25 to 79 (CALASPQKSRPSSEWRRKLIPVRSSRSPRSPSFAPKKPPPPPPSPPLSPSSPPSN) is disordered. Residues 45–57 (PVRSSRSPRSPSF) carry the SCOOP motif motif. The span at 45–59 (PVRSSRSPRSPSFAP) shows a compositional bias: low complexity. A SxS motif essential for MIK2 binding motif is present at residues 49 to 51 (SRS). The span at 60–79 (KKPPPPPPSPPLSPSSPPSN) shows a compositional bias: pro residues.

The protein belongs to the serine rich endogenous peptide (SCOOP) phytocytokine family. Interacts with MIK2 (via extracellular leucine-rich repeat domain); this interaction triggers the formation of complex between MIK2 and the BAK1/SERK3 and SERK4 coreceptors, and subsequent BAK1 activation by phosphorylation.

The protein resides in the cell membrane. Its subcellular location is the secreted. The protein localises to the extracellular space. It is found in the apoplast. Brassicaceae-specific phytocytokine (plant endogenous peptide released into the apoplast) perceived by MIK2 in a BAK1/SERK3 and SERK4 coreceptors-dependent manner, that modulates various physiological and antimicrobial processes including growth prevention and reactive oxygen species (ROS) response regulation. The polypeptide is Serine rich endogenous peptide 2 (Arabidopsis thaliana (Mouse-ear cress)).